We begin with the raw amino-acid sequence, 646 residues long: Chaperone protein DnaK (646 aa).

A Phosphothreonine; by autocatalysis modification is found at threonine 198. Positions 603 to 646 (EQAQQAGGAEGFDPNAFQGGDAGQQKADDGVVDAEFTEVKDDKK) are disordered. Low complexity predominate over residues 618 to 627 (AFQGGDAGQQ).

It belongs to the heat shock protein 70 family.

In terms of biological role, acts as a chaperone. The protein is Chaperone protein DnaK of Acinetobacter baumannii (strain AB307-0294).